A 310-amino-acid polypeptide reads, in one-letter code: tRNA-cytidine(32) 2-sulfurtransferase (310 aa).

Residues 45–50 carry the PP-loop motif motif; sequence SGGKDS. 3 residues coordinate [4Fe-4S] cluster: Cys-120, Cys-123, and Cys-211.

This sequence belongs to the TtcA family. As to quaternary structure, homodimer. Mg(2+) is required as a cofactor. It depends on [4Fe-4S] cluster as a cofactor.

It is found in the cytoplasm. The enzyme catalyses cytidine(32) in tRNA + S-sulfanyl-L-cysteinyl-[cysteine desulfurase] + AH2 + ATP = 2-thiocytidine(32) in tRNA + L-cysteinyl-[cysteine desulfurase] + A + AMP + diphosphate + H(+). It participates in tRNA modification. In terms of biological role, catalyzes the ATP-dependent 2-thiolation of cytidine in position 32 of tRNA, to form 2-thiocytidine (s(2)C32). The sulfur atoms are provided by the cysteine/cysteine desulfurase (IscS) system. In Shewanella baltica (strain OS195), this protein is tRNA-cytidine(32) 2-sulfurtransferase.